We begin with the raw amino-acid sequence, 115 residues long: Thionin-like protein 2 (115 aa).

A signal peptide spans 1-20 (MLVAVMIVMVIGNLLAQTAA).

This sequence belongs to the plant thionin (TC 1.C.44) family. Post-translationally, is disulfide-linked.

Its subcellular location is the secreted. May be involved in plant defense. This chain is Thionin-like protein 2, found in Arabidopsis thaliana (Mouse-ear cress).